A 393-amino-acid chain; its full sequence is Alpha-1,2 mannosyltransferase KTR1 (393 aa).

Residues 1 to 16 (MAKIMIPASKQPVYKK) lie on the Cytoplasmic side of the membrane. A helical; Signal-anchor for type II membrane protein transmembrane segment spans residues 17–34 (LGLLLVAVFTVYVFFHGA). The segment at 35–68 (QYARGSAPSPKYSTVLSSGSGYKYSKVELPKYTG) is stem region. Residues 35–393 (QYARGSAPSP…KPAGWQNHIG (359 aa)) lie on the Lumenal side of the membrane. The catalytic stretch occupies residues 69–393 (PREKATFVTL…KPAGWQNHIG (325 aa)). Asparagine 120 is a glycosylation site (N-linked (GlcNAc...) asparagine). The Nucleophile role is filled by glutamate 280.

This sequence belongs to the glycosyltransferase 15 family. It depends on Mn(2+) as a cofactor. In terms of processing, N-glycosylated.

The protein localises to the golgi apparatus membrane. It participates in protein modification; protein glycosylation. Functionally, mannosyltransferase that transfers a mannose residue from GDP-mannose to a range of acceptors in vitro, forming an alpha-(1-&gt;2)-D-mannosyl-D-mannose linkage. This Saccharomyces cerevisiae (strain ATCC 204508 / S288c) (Baker's yeast) protein is Alpha-1,2 mannosyltransferase KTR1 (KTR1).